Consider the following 131-residue polypeptide: Glycine cleavage system H protein (131 aa).

A Lipoyl-binding domain is found at 24–106 (RVTVGISDHA…YGEGWIFVVE (83 aa)). Position 65 is an N6-lipoyllysine (lysine 65).

This sequence belongs to the GcvH family. The glycine cleavage system is composed of four proteins: P, T, L and H. (R)-lipoate is required as a cofactor.

The glycine cleavage system catalyzes the degradation of glycine. The H protein shuttles the methylamine group of glycine from the P protein to the T protein. The sequence is that of Glycine cleavage system H protein from Xanthomonas euvesicatoria pv. vesicatoria (strain 85-10) (Xanthomonas campestris pv. vesicatoria).